The chain runs to 221 residues: Putative efflux system component YhbJ (221 aa).

A helical transmembrane segment spans residues 17 to 37 (LILTNIIGLIVVLAIIAGGAY).

This sequence belongs to the membrane fusion protein (MFP) (TC 8.A.1) family.

It localises to the cell membrane. In Bacillus subtilis (strain 168), this protein is Putative efflux system component YhbJ (yhbJ).